Reading from the N-terminus, the 1076-residue chain is MPKRTDIQSILIIGAGPIVIGQACEFDYSGAQACKALREEGFRVILVNSNPATIMTDPVMADATYIEPITWQAVEKIIEAERPDAVLPTMGGQTALNCALDLDKHGVLEKFGVEMIGANADAINMAEDRDLFDQAMKRIGLECPKAKVAHSMDEAWQIQSELGFPVIIRPSYTMGGSGGGVAYNKEEFEEICTRGFELSNNHELLIDESLLGWKEYEMEVVRDKNDNCIIVCAIENFDPMGVHTGDSITVAPAQTLTDKEYQNMRDASLAVLREIGVETGGSNVQFGVDPDTGRVVVIEMNPRVSRSSALASKATGFPIAKIAAKLAVGYTLDELSNDITGGRTPASFEPSIDYVVTKIPRFTFEKFPQANDRLTTQMKSVGEVMAIGRTFQESLQKALRGLETGNDGLDPKVTRFNDDGMAHIKGELQVAGAERIFYVADAMRAGLSVEELFRLTNIDRWFLVQLEDLVRTEAELAKRSLSELTPRELFALKRKGFSDARLAGLLGVAEKDFRRTRQAAGIRPVYKRVDTCAAEFATDTAYMYSSYEEECEAEVSDRPKIMVLGGGPNRIGQGIEFDYCCVHAALAMRDDGYETIMVNCNPETVSTDYDTSDRLYFEPVTLEDVLEIADKEKPAGVIVQFGGQTPLKLARELEAAGVPIIGTTPDAIDRAEDRERFQHMVDKLGLKQPANATARSXEEAFAKAEAIGYPXVVRPSYVLGGXAMEIVYDASELENYMTHAVKVSNDSPVLLDHFLNCAIEVDIDAVSDGHQVVIGGIMQHIEQAGVHSGDSACALPPYSLPAEVQDEMRDQVKRMAVELGVKGLMNVQLAWQDGEIYVIEVNPRASRTVPFVSKCVGTSLAQVAARCMAGISLAEQGFVEEIVPHFYSVKEAVFPFAKFPGVDPILSPEMKSTGEVMGSGDTFAEAFYKAQLGAGEAIPALEGERKAFLSVRDPDKQGVIDVARSLLGLGFTLCATRGTASALQQAGLPVDVVNKVYEGRPHXVDLLKNDXVAYIVNTTEGRQAINDSSVIRRTALARKVPYATTLAGANAVCLALEYGNAITVRRLQELHAGVSQ.

A carboxyphosphate synthetic domain region spans residues 1–403; it reads MPKRTDIQSI…SLQKALRGLE (403 aa). ATP contacts are provided by Arg-129, Arg-169, Gly-175, Gly-176, Glu-208, Leu-210, Glu-215, Gly-241, Val-242, His-243, Gln-285, and Glu-299. An ATP-grasp 1 domain is found at 133-328; sequence DQAMKRIGLE…IAKIAAKLAV (196 aa). Residues Gln-285, Glu-299, and Asn-301 each coordinate Mg(2+). The Mn(2+) site is built by Gln-285, Glu-299, and Asn-301. An oligomerization domain region spans residues 404-553; it reads TGNDGLDPKV…YSSYEEECEA (150 aa). Residues 554–935 form a carbamoyl phosphate synthetic domain region; sequence EVSDRPKIMV…AFYKAQLGAG (382 aa). Residues 678-869 enclose the ATP-grasp 2 domain; that stretch reads QHMVDKLGLK…LAQVAARCMA (192 aa). ATP-binding residues include Arg-714, His-753, Leu-755, Glu-760, Gly-785, Val-786, His-787, Ser-788, Gln-828, and Glu-840. Gln-828, Glu-840, and Asn-842 together coordinate Mg(2+). The Mn(2+) site is built by Gln-828, Glu-840, and Asn-842. Residues 936-1076 enclose the MGS-like domain; it reads EAIPALEGER…LQELHAGVSQ (141 aa). The interval 936–1076 is allosteric domain; sequence EAIPALEGER…LQELHAGVSQ (141 aa).

This sequence belongs to the CarB family. As to quaternary structure, composed of two chains; the small (or glutamine) chain promotes the hydrolysis of glutamine to ammonia, which is used by the large (or ammonia) chain to synthesize carbamoyl phosphate. Tetramer of heterodimers (alpha,beta)4. The cofactor is Mg(2+). Mn(2+) is required as a cofactor.

The catalysed reaction is hydrogencarbonate + L-glutamine + 2 ATP + H2O = carbamoyl phosphate + L-glutamate + 2 ADP + phosphate + 2 H(+). The enzyme catalyses hydrogencarbonate + NH4(+) + 2 ATP = carbamoyl phosphate + 2 ADP + phosphate + 2 H(+). It participates in amino-acid biosynthesis; L-arginine biosynthesis; carbamoyl phosphate from bicarbonate: step 1/1. It functions in the pathway pyrimidine metabolism; UMP biosynthesis via de novo pathway; (S)-dihydroorotate from bicarbonate: step 1/3. Its function is as follows. Large subunit of the glutamine-dependent carbamoyl phosphate synthetase (CPSase). CPSase catalyzes the formation of carbamoyl phosphate from the ammonia moiety of glutamine, carbonate, and phosphate donated by ATP, constituting the first step of 2 biosynthetic pathways, one leading to arginine and/or urea and the other to pyrimidine nucleotides. The large subunit (synthetase) binds the substrates ammonia (free or transferred from glutamine from the small subunit), hydrogencarbonate and ATP and carries out an ATP-coupled ligase reaction, activating hydrogencarbonate by forming carboxy phosphate which reacts with ammonia to form carbamoyl phosphate. The protein is Carbamoyl phosphate synthase large chain of Halomonas eurihalina.